We begin with the raw amino-acid sequence, 173 residues long: MFKKLFGLDKKAKNEAASPQEELIYAPLNGTLVDIEDVPDPTFAQKMMGDGFAIDPRDGHVVAPVAGEIVQVFPTKHAVGIKTPGGAELLIHIGLETVNMKGEGFTAHVKEGDKVNVGDALVDFDLELVKEKAESTVTPVVVTNIDQLAVFEKQAATETKAGETSLVTIKVQG.

The PTS EIIA type-1 domain occupies aspartate 40–asparagine 144. 2 residues coordinate Zn(2+): histidine 77 and histidine 92. Catalysis depends on histidine 92, which acts as the Tele-phosphohistidine intermediate; for EIIA activity. Histidine 92 is subject to Phosphohistidine; by HPr.

As to quaternary structure, heterodimer with glycerol kinase (glpk). Zn(2+) is required as a cofactor.

Its subcellular location is the cytoplasm. Its function is as follows. The phosphoenolpyruvate-dependent sugar phosphotransferase system (sugar PTS), a major carbohydrate active transport system, catalyzes the phosphorylation of incoming sugar substrates concomitantly with their translocation across the cell membrane. The enzyme II complex composed of PtsG and Crr is involved in glucose transport. The protein is PTS system glucose-specific EIIA component (crr) of Halalkalibacterium halodurans (strain ATCC BAA-125 / DSM 18197 / FERM 7344 / JCM 9153 / C-125) (Bacillus halodurans).